Consider the following 116-residue polypeptide: Ig heavy chain V region 441 (116 aa).

An N-terminal signal peptide occupies residues 1–18; the sequence is MDFGLIFFIVALLKGVQC. The Ig-like domain maps to 19–116; it reads EVKLLESGGG…EDTALYYCAR (98 aa).

The protein is Ig heavy chain V region 441 of Mus musculus (Mouse).